The chain runs to 110 residues: Parvalbumin alpha (110 aa).

N-acetylserine is present on serine 2. Phosphoserine occurs at positions 2 and 24. EF-hand domains follow at residues 39 to 74 and 78 to 110; these read KSADDVKKVFHILDKDKSGFIEEDELGFILKGFSPD and LSAKETKTLMAAGDKDGDGKIGVDEFSTLVAES. The Ca(2+) site is built by aspartate 52, aspartate 54, serine 56, phenylalanine 58, glutamate 60, glutamate 63, aspartate 91, aspartate 93, aspartate 95, lysine 97, and glutamate 102.

Belongs to the parvalbumin family.

Its function is as follows. In muscle, parvalbumin is thought to be involved in relaxation after contraction. It binds two calcium ions. The chain is Parvalbumin alpha (PVALB) from Macaca fuscata fuscata (Japanese macaque).